A 177-amino-acid polypeptide reads, in one-letter code: Centromere protein R (177 aa).

K8 is covalently cross-linked (Glycyl lysine isopeptide (Lys-Gly) (interchain with G-Cter in SUMO2)). The LXXLL motif motif lies at 9–13 (LDGLL). S17 is modified (phosphoserine). The segment at 20-50 (PSKITRKKSVITYSPTTGTCQMSLFASPTSS) is DD1. A Glycyl lysine isopeptide (Lys-Gly) (interchain with G-Cter in SUMO2) cross-link involves residue K22. At S28 the chain carries Phosphoserine. The segment covering 41–50 (MSLFASPTSS) has biased composition (polar residues). Residues 41 to 81 (MSLFASPTSSEEQKHRNGLSNEKRKKLNHPSLTESKESTTK) are disordered. Residues 63–66 (KRKK) carry the Nuclear localization signal motif. The residue at position 71 (S71) is a Phosphoserine. Residues 83–113 (NDEFMMLLSKVEKLSEEIMEIMQNLSSIQAL) adopt a coiled-coil conformation. Residues 172–176 (LKAIL) carry the LXXIL motif motif.

In terms of assembly, homodimer; mediated by the coiled coil domain. Isoform 3, but not other isoforms, interacts with the cytoplasmic tail of integrin ITGB3. The relevance of the interaction with ITGB3 is however uncertain, since isoform 3 is mainly nuclear. Interacts with CCNA2 and MTA1. Interacts with NFKB1 NF-kappa-B subunit. Component of the CENPA-CAD complex, composed of CENPI, CENPK, CENPL, CENPO, CENPP, CENPQ, CENPR and CENPS. The CENPA-CAD complex interacts with the CENPA-NAC complex, at least composed of CENPA, CENPC, CENPH, CENPM, CENPN, CENPT and CENPU. Interacts with TASOR. As to expression, widely expressed. Expressed in spleen, thymus, prostate, ovary, small intestine and white blood cells. Highly expressed in testis and colon. Isoform 4 is expressed in platelets, lymphocytes and granulocytes.

It localises to the nucleus. It is found in the chromosome. Its subcellular location is the centromere. The protein resides in the kinetochore. The protein localises to the cytoplasm. Transcription coregulator that can have both coactivator and corepressor functions. Isoform 1, but not other isoforms, is involved in the coactivation of nuclear receptors for retinoid X (RXRs) and thyroid hormone (TRs) in a ligand-dependent fashion. In contrast, it does not coactivate nuclear receptors for retinoic acid, vitamin D, progesterone receptor, nor glucocorticoid. Acts as a coactivator for estrogen receptor alpha. Acts as a transcriptional corepressor via its interaction with the NFKB1 NF-kappa-B subunit, possibly by interfering with the transactivation domain of NFKB1. Induces apoptosis in breast cancer cells, but not in other cancer cells, via a caspase-2 mediated pathway that involves mitochondrial membrane permeabilization but does not require other caspases. May also act as an inhibitor of cyclin A-associated kinase. Also acts a component of the CENPA-CAD (nucleosome distal) complex, a complex recruited to centromeres which is involved in assembly of kinetochore proteins, mitotic progression and chromosome segregation. May be involved in incorporation of newly synthesized CENPA into centromeres via its interaction with the CENPA-NAC complex. The chain is Centromere protein R (ITGB3BP) from Homo sapiens (Human).